Here is a 765-residue protein sequence, read N- to C-terminus: AMP deaminase 3 (765 aa).

Residues serine 85 and serine 106 each carry the phosphoserine modification. Residues histidine 315 and histidine 317 each coordinate Zn(2+). Residues histidine 317 and 386 to 391 (KFNSKY) contribute to the substrate site. Position 584 (histidine 584) interacts with Zn(2+). Glutamate 587 provides a ligand contact to substrate. Histidine 606 (proton acceptor) is an active-site residue. Residue aspartate 661 participates in Zn(2+) binding. 662–665 (DPMQ) contacts substrate.

This sequence belongs to the metallo-dependent hydrolases superfamily. Adenosine and AMP deaminases family. As to quaternary structure, homotetramer. Zn(2+) serves as cofactor. As to expression, expressed in adult tissues such as aorta, heart, kidney, lung, muscle and thyroid. Weakly expressed in thyroid and not detected in liver.

It catalyses the reaction AMP + H2O + H(+) = IMP + NH4(+). The protein operates within purine metabolism; IMP biosynthesis via salvage pathway; IMP from AMP: step 1/1. Functionally, AMP deaminase plays a critical role in energy metabolism. The polypeptide is AMP deaminase 3 (Rattus norvegicus (Rat)).